A 227-amino-acid polypeptide reads, in one-letter code: MLITIPDLLTPEEVAYMRQILEGTAWVDGRSTAGDQAGKVKRNLQVPVDSPEARELGNIVLRALGRSPVYSSAALPAHILPPMFNRYDEGMTFGAHVDGSIRVVPGTGQRIRTDVSTTVFLTPPEDYDGGELVMHDTYGQHSVKLPAGHAVVYPATSLHSVTPVTRGSRWASFFWAQSMVRDDWRRHMLYDLDMSIMRIRSMLPDDDPAVTGITAHYHNMIRHWAET.

Positions 78 to 178 (HILPPMFNRY…RWASFFWAQS (101 aa)) constitute a Fe2OG dioxygenase domain. 3 residues coordinate Fe cation: His96, Asp98, and His159. Residue Arg169 coordinates 2-oxoglutarate.

The cofactor is Fe(2+). L-ascorbate serves as cofactor.

The protein is PKHD-type hydroxylase Pden_4677 of Paracoccus denitrificans (strain Pd 1222).